Consider the following 515-residue polypeptide: 2,3-bisphosphoglycerate-independent phosphoglycerate mutase (515 aa).

Asp-14 and Ser-64 together coordinate Mn(2+). Ser-64 acts as the Phosphoserine intermediate in catalysis. Substrate is bound by residues His-125, 155–156, Arg-187, Arg-193, 263–266, and Lys-337; these read RD and RADR. Mn(2+) contacts are provided by Asp-404, His-408, Asp-445, His-446, and His-464.

It belongs to the BPG-independent phosphoglycerate mutase family. In terms of assembly, monomer. Requires Mn(2+) as cofactor.

It carries out the reaction (2R)-2-phosphoglycerate = (2R)-3-phosphoglycerate. It functions in the pathway carbohydrate degradation; glycolysis; pyruvate from D-glyceraldehyde 3-phosphate: step 3/5. Its function is as follows. Catalyzes the interconversion of 2-phosphoglycerate and 3-phosphoglycerate. This chain is 2,3-bisphosphoglycerate-independent phosphoglycerate mutase, found in Pseudomonas paraeruginosa (strain DSM 24068 / PA7) (Pseudomonas aeruginosa (strain PA7)).